The sequence spans 353 residues: Mitochondrial ubiquitin ligase activator of nfkb 1 (353 aa).

Residues 1–8 (MENGGRPS) are Cytoplasmic-facing. Residues 9–29 (VGQVILLTTSSAITALFYSIY) traverse the membrane as a helical segment. At 30–239 (RHKYRSVQTL…LLEKQEVQMR (210 aa)) the chain is on the mitochondrial intermembrane side. The chain crosses the membrane as a helical span at residues 240–260 (WWRILSIVFGVASCITLFFIL). Residues 261 to 353 (RRKYRHYKEK…IDRIVPLYNS (93 aa)) are Cytoplasmic-facing. Residues 303-341 (CSICLSTEKSCVFLECGHVCSCISCYQALPSPKKCPICR) form an RING-type zinc finger.

Homooligomer.

It localises to the mitochondrion outer membrane. The catalysed reaction is S-ubiquitinyl-[E2 ubiquitin-conjugating enzyme]-L-cysteine + [acceptor protein]-L-lysine = [E2 ubiquitin-conjugating enzyme]-L-cysteine + N(6)-ubiquitinyl-[acceptor protein]-L-lysine.. It participates in protein modification; protein ubiquitination. In terms of biological role, E3 ubiquitin-protein ligase that plays a role in the control of mitochondrial morphology. Promotes mitochondrial fragmentation and influences mitochondrial localization. Inhibits cell growth. E3 ubiquitin ligases accept ubiquitin from an E2 ubiquitin-conjugating enzyme in the form of a thioester and then directly transfer the ubiquitin to targeted substrates. This chain is Mitochondrial ubiquitin ligase activator of nfkb 1 (mul1), found in Xenopus laevis (African clawed frog).